Consider the following 319-residue polypeptide: Olfactory receptor 5B21 (319 aa).

The Extracellular segment spans residues 1-26 (MTSMENITEVTEFILLGLTDDPNLQV). N-linked (GlcNAc...) asparagine glycosylation occurs at asparagine 6. A helical membrane pass occupies residues 27–47 (PLLLIFLFIYLVTLIGNGGMM). At 48–55 (VIIFSDSH) the chain is on the cytoplasmic side. The chain crosses the membrane as a helical span at residues 56-76 (LHTPMYFFLSNLSFVDLGYSS). At 77 to 100 (AVAPKMVAALQSGNKVISYNGCAA) the chain is on the extracellular side. Cysteine 98 and cysteine 190 form a disulfide bridge. Residues 101–121 (QFFFFVGFATVECYLLASMAY) form a helical membrane-spanning segment. The Cytoplasmic segment spans residues 122 to 134 (DRHAAVCRPLHYT). A helical transmembrane segment spans residues 135-155 (TTMTTGVCTILTIGSYTCGFL). Topologically, residues 156-197 (NASIHAADTFKLSFCGSNKINHFFCDIPPLLALACSSTHISK) are extracellular. Residues 198–218 (LVVFFVVGFNVFFTLLVIIIS) form a helical membrane-spanning segment. The Cytoplasmic portion of the chain corresponds to 219 to 238 (YFFIYIAIQNMKSSEGRKKA). A helical membrane pass occupies residues 239-259 (FSTCASHLTAVSIFYGTIIFM). Residues 260 to 272 (YLQPSSGQSMDTD) lie on the Extracellular side of the membrane. The helical transmembrane segment at 273-293 (KIASVFYTVVIPMLNPLIYSL) threads the bilayer. Residues 294-319 (RNREVKSALWKILNRFYPASFSVSRK) are Cytoplasmic-facing.

This sequence belongs to the G-protein coupled receptor 1 family.

Its subcellular location is the cell membrane. Its function is as follows. Odorant receptor. The sequence is that of Olfactory receptor 5B21 from Mus musculus (Mouse).